The primary structure comprises 63 residues: MARRCEICDKGVVAGVQFSHSHRQSKRTWAPNIKKIKALVNGTPKTVRVCTRCLRSGKVQRAI.

This sequence belongs to the bacterial ribosomal protein bL28 family.

This is Large ribosomal subunit protein bL28 from Clostridium botulinum (strain Alaska E43 / Type E3).